Here is a 63-residue protein sequence, read N- to C-terminus: Cecropin-2 (63 aa).

The signal sequence occupies residues 1–23; that stretch reads MNFYKVFIFVALILAISLGQSEA. Residue arginine 62 is modified to Arginine amide.

This sequence belongs to the cecropin family.

It is found in the secreted. Its function is as follows. Cecropins have lytic and antibacterial activity against several Gram-positive and Gram-negative bacteria. This Drosophila virilis (Fruit fly) protein is Cecropin-2 (Cec2A).